A 376-amino-acid chain; its full sequence is N-acetyldiaminopimelate deacetylase (376 aa).

Asp-69 is an active-site residue. Glu-128 functions as the Proton acceptor in the catalytic mechanism.

It belongs to the peptidase M20A family. N-acetyldiaminopimelate deacetylase subfamily.

It carries out the reaction N-acetyl-(2S,6S)-2,6-diaminopimelate + H2O = (2S,6S)-2,6-diaminopimelate + acetate. It functions in the pathway amino-acid biosynthesis; L-lysine biosynthesis via DAP pathway; LL-2,6-diaminopimelate from (S)-tetrahydrodipicolinate (acetylase route): step 3/3. Its function is as follows. Catalyzes the conversion of N-acetyl-diaminopimelate to diaminopimelate and acetate. The sequence is that of N-acetyldiaminopimelate deacetylase from Streptococcus pneumoniae (strain Hungary19A-6).